The sequence spans 528 residues: Serine/threonine-protein kinase akt-2 (528 aa).

The PH domain maps to 12 to 115 (DIVIESWLHK…WIEAIQAVSS (104 aa)). The disordered stretch occupies residues 121 to 153 (ENAGNTSMQEEDTNGNPSGESDVNMDATSTRSD). Polar residues predominate over residues 123-153 (AGNTSMQEEDTNGNPSGESDVNMDATSTRSD). The 258-residue stretch at 180–437 (FDFLKVLGQG…AREVSRAEFF (258 aa)) folds into the Protein kinase domain. ATP contacts are provided by residues 186–194 (LGQGTFGKV) and K209. The Proton acceptor role is filled by D303. The region spanning 438–515 (KDVDWEATLR…YYVSGSLERS (78 aa)) is the AGC-kinase C-terminal domain.

This sequence belongs to the protein kinase superfamily. AGC Ser/Thr protein kinase family. RAC subfamily. In terms of assembly, interacts with pdk-1, sgk-1, akt-1 and daf-16. Part of a complex containing sgk-1, akt-1 and akt-2. Mg(2+) serves as cofactor. As to expression, expressed in neurons, muscle cells of the pharynx, rectal gland cells, and spermatheca.

The enzyme catalyses L-seryl-[protein] + ATP = O-phospho-L-seryl-[protein] + ADP + H(+). It carries out the reaction L-threonyl-[protein] + ATP = O-phospho-L-threonyl-[protein] + ADP + H(+). Its activity is regulated as follows. Phosphorylated and activated by pdk-1. In terms of biological role, acts downstream of PI3 kinase age-1 and kinase pdk-1 in the daf-2/insulin receptor-like transduction pathway. Essential role in regulating developmental arrest at the dauer stage. Phosphorylates Forkhead-related daf-16 and the longevity-promoting skn-1 transcription factors, which inhibits their entry into the nucleus and antagonizes their functions. Role in immune function and pathogen resistance. Downstream of age-1 and together with akt-1 and sgk-1, promotes cell survival during embryonic development. Plays a role in maintaining the gonadal basement membrane through antagonizing akt-1 activity. In Caenorhabditis elegans, this protein is Serine/threonine-protein kinase akt-2.